We begin with the raw amino-acid sequence, 538 residues long: Putative cysteine ligase BshC (538 aa).

Residues isoleucine 248–leucine 268 adopt a coiled-coil conformation.

Belongs to the BshC family.

Functionally, involved in bacillithiol (BSH) biosynthesis. May catalyze the last step of the pathway, the addition of cysteine to glucosamine malate (GlcN-Mal) to generate BSH. The sequence is that of Putative cysteine ligase BshC from Bacillus cereus (strain G9842).